A 337-amino-acid chain; its full sequence is ATP-dependent 6-phosphofructokinase (337 aa).

Position 11 (Gly-11) interacts with ATP. 21–25 (RAVVR) serves as a coordination point for ADP. Residues 72–73 (RY) and 102–105 (GDGS) contribute to the ATP site. Mg(2+) is bound at residue Asp-103. 125 to 127 (TID) contacts substrate. Catalysis depends on Asp-127, which acts as the Proton acceptor. Arg-154 contributes to the ADP binding site. Residues Arg-162 and 169–171 (MGR) contribute to the substrate site. ADP is bound by residues 185–187 (GAD) and 214–216 (KNH). Substrate-binding positions include Glu-223, Arg-245, and 251–254 (HILR).

The protein belongs to the phosphofructokinase type A (PFKA) family. ATP-dependent PFK group I subfamily. Prokaryotic clade 'B1' sub-subfamily. As to quaternary structure, homotetramer. Mg(2+) is required as a cofactor.

It localises to the cytoplasm. It carries out the reaction beta-D-fructose 6-phosphate + ATP = beta-D-fructose 1,6-bisphosphate + ADP + H(+). Its pathway is carbohydrate degradation; glycolysis; D-glyceraldehyde 3-phosphate and glycerone phosphate from D-glucose: step 3/4. Allosterically activated by ADP and other diphosphonucleosides, and allosterically inhibited by phosphoenolpyruvate. Functionally, catalyzes the phosphorylation of D-fructose 6-phosphate to fructose 1,6-bisphosphate by ATP, the first committing step of glycolysis. This is ATP-dependent 6-phosphofructokinase from Streptococcus mutans serotype c (strain ATCC 700610 / UA159).